The chain runs to 109 residues: MMLGKKLHVKKNDTVIVITGKDKAKTGKVLQILPKKDGVLVEGINIVKRHTRPRGSEAGAIVEKEAVIHVSNVMIYCNKCGKPVRTRINTLEDGKKVRICVKCGEAFDK.

The protein belongs to the universal ribosomal protein uL24 family. As to quaternary structure, part of the 50S ribosomal subunit.

One of two assembly initiator proteins, it binds directly to the 5'-end of the 23S rRNA, where it nucleates assembly of the 50S subunit. In terms of biological role, one of the proteins that surrounds the polypeptide exit tunnel on the outside of the subunit. This Geotalea uraniireducens (strain Rf4) (Geobacter uraniireducens) protein is Large ribosomal subunit protein uL24.